A 2108-amino-acid chain; its full sequence is Mycocerosic acid synthase-like polyketide synthase (2108 aa).

Positions 1 to 23 (MGKERTKTVDRTRVTPVAVIGMG) are cleaved as a signal peptide. Cys-24 carries N-palmitoyl cysteine lipidation. A lipid anchor (S-diacylglycerol cysteine) is attached at Cys-24. Residues 24-436 (CRLPGGIDSP…GTNVHAIVEQ (413 aa)) form the Ketosynthase family 3 (KS3) domain. Cys-185 acts as the Acyl-thioester intermediate; for beta-ketoacyl synthase activity in catalysis. Residues His-320 and His-356 each act as for beta-ketoacyl synthase activity in the active site. The linker domain (LD) stretch occupies residues 438–542 (PVPAPESGAP…PYPPAVGQDD (105 aa)). Positions 543–842 (RGPVWVFSGQ…AAALAGMRRE (300 aa)) are acyltransferase (AT). Residue Ser-634 is the Acyl-ester intermediate; for acyltransferase activity of the active site. Positions 900–1184 (NTVAVHPLLG…LAVRGLQLGT (285 aa)) are dehydratase (DH). An N-terminal hotdog fold region spans residues 905 to 1025 (HPLLGSHVRL…AVLHVVREAD (121 aa)). Residues 905–1191 (HPLLGSHVRL…LGTGASQASE (287 aa)) enclose the PKS/mFAS DH domain. Residue His-938 is the Proton acceptor; for dehydratase activity of the active site. Residues 1044–1191 (PHKVDGAEVR…LGTGASQASE (148 aa)) form a C-terminal hotdog fold region. Residue Asp-1108 is the Proton donor; for dehydratase activity of the active site. Residues 1220–1391 (AWLLISTCDA…SGEDETAWRN (172 aa)) form a pseudo beta-ketoacyl reductase (PsiKR) region. Positions 1419-1743 (AGMRLQIRTP…EHTGKLILDV (325 aa)) are enoylreductase (ER). The interval 1765–2004 (GSYIITGGLG…HSPFAEKFQS (240 aa)) is beta-ketoacyl reductase (KR). Residues 1773–1776 (LGGL), 1796–1799 (SRSQ), 1824–1825 (DI), and 1897–1898 (FS) contribute to the NADP(+) site. Positions 2025-2101 (EEWPDRLRRL…DLMCDKLAAD (77 aa)) constitute a Carrier domain. O-(pantetheine 4'-phosphoryl)serine is present on Ser-2060.

In terms of assembly, homodimer.

It is found in the cell membrane. The protein operates within lipid metabolism; fatty acid biosynthesis. In terms of biological role, polyketide synthase likely involved in the biosynthesis of a polymethyl-branched fatty acid (PMB-FA) that might only be produced during host infection. Is required for the full virulence of M.tuberculosis during host infection. This chain is Mycocerosic acid synthase-like polyketide synthase, found in Mycobacterium tuberculosis (strain ATCC 25618 / H37Rv).